A 133-amino-acid chain; its full sequence is Small ribosomal subunit protein uS8 (133 aa).

The protein belongs to the universal ribosomal protein uS8 family. Part of the 30S ribosomal subunit.

Functionally, one of the primary rRNA binding proteins, it binds directly to 16S rRNA central domain where it helps coordinate assembly of the platform of the 30S subunit. The polypeptide is Small ribosomal subunit protein uS8 (Ignicoccus hospitalis (strain KIN4/I / DSM 18386 / JCM 14125)).